Here is a 375-residue protein sequence, read N- to C-terminus: B3 domain-containing protein REM-like 2 (375 aa).

3 consecutive DNA-binding regions (TF-B3) follow at residues 51–147 (SFVA…KRLY), 131–226 (FVTV…YGTN), and 277–375 (RLVI…KSGK).

It localises to the nucleus. This is B3 domain-containing protein REM-like 2 from Arabidopsis thaliana (Mouse-ear cress).